The following is a 101-amino-acid chain: MNLERVSNEEKLNLCRKYYLGGFAFLPFLWLVNIFWFFREAFLVPAYTEQSQIKGYVWRSAVGFLFWVIVLTSWITIFQIYRPRWGALGDYLSFTIPLGTP.

At 1-17 the chain is on the cytoplasmic side; the sequence is MNLERVSNEEKLNLCRK. Residues 18–36 constitute an intramembrane region (helical); sequence YYLGGFAFLPFLWLVNIFW. Residues 37-57 are Cytoplasmic-facing; that stretch reads FFREAFLVPAYTEQSQIKGYV. A helical transmembrane segment spans residues 58–78; the sequence is WRSAVGFLFWVIVLTSWITIF. Residues 79 to 101 lie on the Lumenal side of the membrane; the sequence is QIYRPRWGALGDYLSFTIPLGTP.

Belongs to the PEN-2 family. As to quaternary structure, the functional gamma-secretase complex is composed of at least four polypeptides: a presenilin homodimer (PSEN1 or PSEN2), nicastrin (NCSTN), APH1 (APH1A or APH1B) and PSENEN. As to expression, widely expressed. Expressed in leukocytes, lung, placenta, small intestine, liver, kidney, spleen thymus, skeletal muscle, heart and brain.

The protein localises to the endoplasmic reticulum membrane. Its subcellular location is the golgi apparatus. It localises to the golgi stack membrane. The protein resides in the cell membrane. It is found in the membrane. Functionally, essential subunit of the gamma-secretase complex, an endoprotease complex that catalyzes the intramembrane cleavage of integral membrane proteins such as Notch receptors and APP (amyloid-beta precursor protein). The gamma-secretase complex plays a role in Notch and Wnt signaling cascades and regulation of downstream processes via its role in processing key regulatory proteins, and by regulating cytosolic CTNNB1 levels. PSENEN modulates both endoproteolysis of presenilin and gamma-secretase activity. The protein is Gamma-secretase subunit PEN-2 (PSENEN) of Homo sapiens (Human).